The sequence spans 418 residues: CinA-like protein (418 aa).

This sequence belongs to the CinA family.

In Leptospira borgpetersenii serovar Hardjo-bovis (strain L550), this protein is CinA-like protein.